We begin with the raw amino-acid sequence, 127 residues long: Large ribosomal subunit protein bL17 (127 aa).

It belongs to the bacterial ribosomal protein bL17 family. As to quaternary structure, part of the 50S ribosomal subunit. Contacts protein L32.

The protein is Large ribosomal subunit protein bL17 of Legionella pneumophila (strain Lens).